A 392-amino-acid polypeptide reads, in one-letter code: Alpha-(1,3)-fucosyltransferase fut-6 (392 aa).

The Cytoplasmic segment spans residues 1-12 (MSQIGGATCTWR). A helical; Signal-anchor for type II membrane protein membrane pass occupies residues 13–35 (YLGRFVTLGIYASVALFVWYTLV). The Lumenal segment spans residues 36-392 (PTRSKHKDSI…CNNQIASKYL (357 aa)). Asn-158 carries an N-linked (GlcNAc...) asparagine glycan.

Belongs to the glycosyltransferase 10 family. Requires Unlike other alpha-(1,3)-fucosyltransferases, appears not to require a divalent metal cation as cofactor. as cofactor.

The protein localises to the golgi apparatus. The protein resides in the golgi stack membrane. It participates in protein modification; protein glycosylation. Inhibited by divalent metal cations. Its function is as follows. Involved in the fucosylation of N-glycans. Preferentially catalyzes the addition of fucose in alpha 1-3 linkage to the distal GlcNAc residue in N-glycans. Catalyzes the transfer of fucose to Gal-beta-1-4-GlcNAc-alpha-pNP (LN-pNP) and Gal-beta-1-4-GlcNAc-beta-1-3-Gal-beta-1-4-Glc (LNnT). Unlike alpha-(1,3)-fucosyltransferase fut-1, does not transfer fucose to Man-alpha-1-3-(Man-alpha-1-6)-Man-beta-1-4-GlcNAc-beta-1-4-GlcNAc-beta-1-Asn (M3), Man-alpha-1-3-(Man-alpha-1-6)-Man-beta-1-4-GlcNAc-beta-1-4-(Fuc-alpha-1-6)-GlcNAc-beta-1-Asn (M3F6) and GlcNAc-beta-1-2-Man-alpha-1-3-(GlcNAc-beta-1-2-Man-alpha-1-6)-Man-beta-1-4-GlcNAc-beta-1-4(Fuc-alpha-1-6)-GlcNAc-beta-1-Asn (GnM3F6). This chain is Alpha-(1,3)-fucosyltransferase fut-6, found in Caenorhabditis elegans.